The primary structure comprises 629 residues: tRNA uridine 5-carboxymethylaminomethyl modification enzyme MnmG (629 aa).

FAD is bound by residues 15–20 (GAGHAG), Val127, and Ser182. Residues 203 to 226 (TPPRVKSSTIDYSKTEEQPGDDHP) form a disordered region. Positions 215–226 (SKTEEQPGDDHP) are enriched in basic and acidic residues. NAD(+) is bound at residue 274–288 (GARYCPSIEDKIVRF). FAD is bound at residue Gln371.

The protein belongs to the MnmG family. As to quaternary structure, homodimer. Heterotetramer of two MnmE and two MnmG subunits. The cofactor is FAD.

The protein resides in the cytoplasm. In terms of biological role, NAD-binding protein involved in the addition of a carboxymethylaminomethyl (cmnm) group at the wobble position (U34) of certain tRNAs, forming tRNA-cmnm(5)s(2)U34. The chain is tRNA uridine 5-carboxymethylaminomethyl modification enzyme MnmG from Listeria innocua serovar 6a (strain ATCC BAA-680 / CLIP 11262).